The sequence spans 422 residues: Serine protease HTRA2, mitochondrial (422 aa).

A mitochondrion-targeting transit peptide spans methionine 1–isoleucine 17. The propeptide occupies alanine 18 to glycine 74. The interval serine 24–arginine 56 is disordered. Positions proline 41–glutamine 51 are enriched in polar residues. The chain crosses the membrane as a helical span at residues leucine 64 to isoleucine 82. 2 consecutive short sequence motifs (IAP-binding) follow at residues alanine 75–serine 78 and serine 94–threonine 97. The tract at residues serine 139–leucine 302 is serine protease. Active-site charge relay system residues include histidine 157, aspartate 189, and serine 266. One can recognise a PDZ domain in the interval methionine 325 to valine 410.

It belongs to the peptidase S1C family. Interacts with th/DIAP1 (via BIR 2 domain).

It localises to the mitochondrion intermembrane space. Its subcellular location is the mitochondrion membrane. It carries out the reaction Cleavage of non-polar aliphatic amino-acids at the P1 position, with a preference for Val, Ile and Met. At the P2 and P3 positions, Arg is selected most strongly with a secondary preference for other hydrophilic residues.. In terms of biological role, serine protease that shows proteolytic activity against a non-specific substrate beta-casein. Promotes or induces cell death either by direct binding to and inhibition of BIRC proteins (also called inhibitor of apoptosis proteins, IAPs), leading to an increase in caspase activity, or by a BIRC inhibition-independent, caspase-independent and serine protease activity-dependent mechanism. Can antagonize antiapoptotic activity of th/Diap1 by directly inducing the degradation of th/Diap1. The polypeptide is Serine protease HTRA2, mitochondrial (Drosophila erecta (Fruit fly)).